Consider the following 411-residue polypeptide: ATP-dependent Clp protease ATP-binding subunit ClpX (411 aa).

Residues 1-49 (MSDKNIRCSFCGRTQKEVKKLIAGPGVYICDECVKLAYDIIEEEDSEEI) form the ClpX-type ZB domain. The Zn(2+) site is built by Cys8, Cys11, Cys30, and Cys33. ATP is bound at residue 115 to 122 (PTGVGKTL).

It belongs to the ClpX chaperone family. In terms of assembly, component of the ClpX-ClpP complex. Forms a hexameric ring that, in the presence of ATP, binds to fourteen ClpP subunits assembled into a disk-like structure with a central cavity, resembling the structure of eukaryotic proteasomes.

ATP-dependent specificity component of the Clp protease. It directs the protease to specific substrates. Can perform chaperone functions in the absence of ClpP. In Dictyoglomus turgidum (strain DSM 6724 / Z-1310), this protein is ATP-dependent Clp protease ATP-binding subunit ClpX.